The following is a 579-amino-acid chain: Cytochrome P450 monooxygenase prx9 (579 aa).

The chain crosses the membrane as a helical span at residues 6–25 (LPLGSFVGTTLLLFILYKLV). 3 N-linked (GlcNAc...) asparagine glycosylation sites follow: N194, N292, and N390. C512 contributes to the heme binding site.

Belongs to the cytochrome P450 family. Heme is required as a cofactor.

The protein resides in the membrane. It functions in the pathway sesquiterpene biosynthesis. Cytochrome P450 monooxygenase; part of the gene cluster that mediates the biosynthesis of PR-toxin, a bicyclic sesquiterpene belonging to the eremophilane class and acting as a mycotoxin. The first step of the pathway is catalyzed by the aristolochene synthase which performs the cyclization of trans,trans-farnesyl diphosphate (FPP) to the bicyclic sesquiterpene aristolochene. Following the formation of aristolochene, the non-oxygenated aristolochene is converted to the trioxygenated intermediate eremofortin B, via 7-epi-neopetasone. This conversion appears to involve three enzymes, a hydroxysterol oxidase-like enzyme, the quinone-oxidase prx3 that forms the quinone-type-structure in the bicyclic nucleus of aristolochene with the C8-oxo group and the C-3 hydroxyl group, and the P450 monooxygenase prx9 that introduces the epoxide at the double bond between carbons 1 and 2. No monoxy or dioxy-intermediates have been reported to be released to the broth, so these three early oxidative reactions may be coupled together. Eremofortin B is further oxidized by another P450 monooxygenase, that introduces a second epoxide between carbons 7 and 11 prior to acetylation to eremofortin A by the acetyltransferase prx11. The second epoxidation may be performed by a second P450 monooxygenase. After the acetylation step, eremofortin A is converted to eremofortin C and then to PR-toxin. First the conversion of eremofortin A to eremofortin C proceeds by oxidation of the side chain of the molecule at C-12 and is catalyzed by the short-chain oxidoreductase prx1. The cytochrome P450 monooxygenase prx8 also plays a role in this step. The primary alcohol formed at C-12 is finally oxidized by the short-chain alcohol dehydrogenase prx4 that forms PR-toxin. This Penicillium rubens (strain ATCC 28089 / DSM 1075 / NRRL 1951 / Wisconsin 54-1255) (Penicillium chrysogenum) protein is Cytochrome P450 monooxygenase prx9.